The chain runs to 400 residues: Argininosuccinate synthase (400 aa).

ATP contacts are provided by residues 10–18 and alanine 38; that span reads AYSGGVDTS. Tyrosine 89 lines the L-citrulline pocket. Glycine 119 serves as a coordination point for ATP. L-aspartate-binding residues include threonine 121, asparagine 125, and aspartate 126. Residue asparagine 125 coordinates L-citrulline. L-citrulline contacts are provided by arginine 129, serine 177, glutamate 262, and tyrosine 274.

Belongs to the argininosuccinate synthase family. Type 1 subfamily. Homotetramer.

It localises to the cytoplasm. The catalysed reaction is L-citrulline + L-aspartate + ATP = 2-(N(omega)-L-arginino)succinate + AMP + diphosphate + H(+). The protein operates within amino-acid biosynthesis; L-arginine biosynthesis; L-arginine from L-ornithine and carbamoyl phosphate: step 2/3. This chain is Argininosuccinate synthase, found in Trichodesmium erythraeum (strain IMS101).